The following is a 446-amino-acid chain: Na(+)-translocating NADH-quinone reductase subunit A (446 aa).

This sequence belongs to the NqrA family. Composed of six subunits; NqrA, NqrB, NqrC, NqrD, NqrE and NqrF.

It carries out the reaction a ubiquinone + n Na(+)(in) + NADH + H(+) = a ubiquinol + n Na(+)(out) + NAD(+). Functionally, NQR complex catalyzes the reduction of ubiquinone-1 to ubiquinol by two successive reactions, coupled with the transport of Na(+) ions from the cytoplasm to the periplasm. NqrA to NqrE are probably involved in the second step, the conversion of ubisemiquinone to ubiquinol. This chain is Na(+)-translocating NADH-quinone reductase subunit A, found in Vibrio parahaemolyticus serotype O3:K6 (strain RIMD 2210633).